The primary structure comprises 132 residues: Translation initiation factor 5A (132 aa).

Lys36 carries the hypusine modification.

This sequence belongs to the eIF-5A family.

It is found in the cytoplasm. Its function is as follows. Functions by promoting the formation of the first peptide bond. The polypeptide is Translation initiation factor 5A (eIF5A) (Thermofilum pendens (strain DSM 2475 / Hrk 5)).